Reading from the N-terminus, the 375-residue chain is Nicotinate-nucleotide--dimethylbenzimidazole phosphoribosyltransferase (375 aa).

Glu323 serves as the catalytic Proton acceptor. A disordered region spans residues 344-375 (LPEKPEELEAGEGPEAAEESSPEPENPEALAE). Residues 351–375 (LEAGEGPEAAEESSPEPENPEALAE) are compositionally biased toward acidic residues.

The protein belongs to the CobT family.

The catalysed reaction is 5,6-dimethylbenzimidazole + nicotinate beta-D-ribonucleotide = alpha-ribazole 5'-phosphate + nicotinate + H(+). It functions in the pathway nucleoside biosynthesis; alpha-ribazole biosynthesis; alpha-ribazole from 5,6-dimethylbenzimidazole: step 1/2. In terms of biological role, catalyzes the synthesis of alpha-ribazole-5'-phosphate from nicotinate mononucleotide (NAMN) and 5,6-dimethylbenzimidazole (DMB). In Streptomyces avermitilis (strain ATCC 31267 / DSM 46492 / JCM 5070 / NBRC 14893 / NCIMB 12804 / NRRL 8165 / MA-4680), this protein is Nicotinate-nucleotide--dimethylbenzimidazole phosphoribosyltransferase.